Consider the following 408-residue polypeptide: Aminopeptidase T (408 aa).

Residues Glu250, Glu316, Glu340, His345, His376, and Asp378 each contribute to the a divalent metal cation site.

This sequence belongs to the peptidase M29 family. Homodimer. Co(2+) is required as a cofactor. It depends on Zn(2+) as a cofactor. Requires Mg(2+) as cofactor.

Its function is as follows. Metal-dependent exopeptidase. The chain is Aminopeptidase T from Thermus aquaticus.